Here is a 259-residue protein sequence, read N- to C-terminus: Aliphatic sulfonates import ATP-binding protein SsuB 2 (259 aa).

In terms of domain architecture, ABC transporter spans 17–238 (LDILGLWKGF…VRSSQAFTSI (222 aa)). Position 49-56 (49-56 (GRSGCGKS)) interacts with ATP.

It belongs to the ABC transporter superfamily. Aliphatic sulfonates importer (TC 3.A.1.17.2) family. The complex is composed of two ATP-binding proteins (SsuB), two transmembrane proteins (SsuC) and a solute-binding protein (SsuA).

The protein resides in the cell inner membrane. The catalysed reaction is ATP + H2O + aliphatic sulfonate-[sulfonate-binding protein]Side 1 = ADP + phosphate + aliphatic sulfonateSide 2 + [sulfonate-binding protein]Side 1.. Its function is as follows. Part of the ABC transporter complex SsuABC involved in aliphatic sulfonates import. Responsible for energy coupling to the transport system. The polypeptide is Aliphatic sulfonates import ATP-binding protein SsuB 2 (Agrobacterium fabrum (strain C58 / ATCC 33970) (Agrobacterium tumefaciens (strain C58))).